A 257-amino-acid chain; its full sequence is Imidazole glycerol phosphate synthase subunit HisF (257 aa).

Active-site residues include Asp11 and Asp130.

Belongs to the HisA/HisF family. In terms of assembly, heterodimer of HisH and HisF.

The protein localises to the cytoplasm. The enzyme catalyses 5-[(5-phospho-1-deoxy-D-ribulos-1-ylimino)methylamino]-1-(5-phospho-beta-D-ribosyl)imidazole-4-carboxamide + L-glutamine = D-erythro-1-(imidazol-4-yl)glycerol 3-phosphate + 5-amino-1-(5-phospho-beta-D-ribosyl)imidazole-4-carboxamide + L-glutamate + H(+). It participates in amino-acid biosynthesis; L-histidine biosynthesis; L-histidine from 5-phospho-alpha-D-ribose 1-diphosphate: step 5/9. In terms of biological role, IGPS catalyzes the conversion of PRFAR and glutamine to IGP, AICAR and glutamate. The HisF subunit catalyzes the cyclization activity that produces IGP and AICAR from PRFAR using the ammonia provided by the HisH subunit. In Vibrio parahaemolyticus serotype O3:K6 (strain RIMD 2210633), this protein is Imidazole glycerol phosphate synthase subunit HisF.